A 208-amino-acid chain; its full sequence is Uridine kinase (208 aa).

11–18 (GGTGSGKS) lines the ATP pocket.

This sequence belongs to the uridine kinase family.

The protein resides in the cytoplasm. It catalyses the reaction uridine + ATP = UMP + ADP + H(+). The catalysed reaction is cytidine + ATP = CMP + ADP + H(+). It participates in pyrimidine metabolism; CTP biosynthesis via salvage pathway; CTP from cytidine: step 1/3. Its pathway is pyrimidine metabolism; UMP biosynthesis via salvage pathway; UMP from uridine: step 1/1. This is Uridine kinase from Clostridium perfringens (strain SM101 / Type A).